The sequence spans 246 residues: MMMENSREQQPESSPANNNSKKKKKKKTASRFRRVCVFCGSSPGKKASYQVAAVQLGQQLVERGIDLVYGGGSVGLMGLVSRAVHGGGGHVVGVVPNGVLPRELIGETLGEVRAVGSMHQRKAEMARESDAFIALPGGYGTLEELLEVITWAQLRIHHKPVGLLNVDGYYDSLLAFIDKAVHEGFVSPPARRIIVAAPTASDLLCKLEEYVPPPHDATALKLTWEMSTVSEQHAGSIYSPKPDMAR.

Residues 1 to 10 are compositionally biased toward basic and acidic residues; sequence MMMENSREQQ. The disordered stretch occupies residues 1 to 28; that stretch reads MMMENSREQQPESSPANNNSKKKKKKKT. Residues glutamate 103, 121-122, 138-144, and threonine 150 each bind substrate; these read RK and GYGTLEE.

Belongs to the LOG family. As to expression, expressed in roots and leaves.

It carries out the reaction N(6)-(dimethylallyl)adenosine 5'-phosphate + H2O = N(6)-dimethylallyladenine + D-ribose 5-phosphate. It catalyses the reaction 9-ribosyl-trans-zeatin 5'-phosphate + H2O = trans-zeatin + D-ribose 5-phosphate. Cytokinin-activating enzyme working in the direct activation pathway. Phosphoribohydrolase that converts inactive cytokinin nucleotides to the biologically active free-base forms. In Oryza sativa subsp. japonica (Rice), this protein is Probable cytokinin riboside 5'-monophosphate phosphoribohydrolase LOGL5 (LOGL5).